Reading from the N-terminus, the 437-residue chain is Glutamate-1-semialdehyde 2,1-aminomutase (437 aa).

At Lys-273 the chain carries N6-(pyridoxal phosphate)lysine.

Belongs to the class-III pyridoxal-phosphate-dependent aminotransferase family. HemL subfamily. In terms of assembly, homodimer. The cofactor is pyridoxal 5'-phosphate.

Its subcellular location is the cytoplasm. It carries out the reaction (S)-4-amino-5-oxopentanoate = 5-aminolevulinate. It functions in the pathway porphyrin-containing compound metabolism; protoporphyrin-IX biosynthesis; 5-aminolevulinate from L-glutamyl-tRNA(Glu): step 2/2. This chain is Glutamate-1-semialdehyde 2,1-aminomutase, found in Chlamydia caviae (strain ATCC VR-813 / DSM 19441 / 03DC25 / GPIC) (Chlamydophila caviae).